The primary structure comprises 411 residues: MAKINDNYLKLKAGYLFPEIGRRVRAFAAANPEAKVIRLGIGDVTQPLTPTILKAFHEAVDDLASENSFMGYGPEQGYDFLIDAIVEKSYKPLGVDLKTTEMFISDGSKCDCANILDIFALDNTVAIGDPVYPVYNDTNVMIGRTGDADDKGYYKGLVYMPCTEENGFFPAYPKEKVDMIYLCFPNNPTGAVATKEQLKGWVDYALANDSIILFDAAYEAFITDPSIPHSIYQVEGAKKCAIEFRSFSKTAGFTGVRCGLVVVPEELEGTTSNGEKYSFNKLWLRRQTTKFNGASYPVQKAAAAVYTEQGWKETQANIDYYMENARIIREGLASAGLTVYGGVNAPYIWLKTPAGLTSWDFFDKLLNDCHVVGTPGSGFGPSGEGYFRLSAFGNRDNVVEAVERIKKNLKK.

Tyrosine 15 and glycine 42 together coordinate substrate. Residues tyrosine 72, 108 to 109, tyrosine 132, asparagine 187, tyrosine 218, and 246 to 248 contribute to the pyridoxal 5'-phosphate site; these read SK and SFS. The substrate site is built by lysine 109, tyrosine 132, and asparagine 187. Residue lysine 249 is modified to N6-(pyridoxal phosphate)lysine. Residues arginine 257 and asparagine 292 each contribute to the pyridoxal 5'-phosphate site. The substrate site is built by asparagine 292 and arginine 388.

The protein belongs to the class-I pyridoxal-phosphate-dependent aminotransferase family. LL-diaminopimelate aminotransferase subfamily. Homodimer. The cofactor is pyridoxal 5'-phosphate.

It catalyses the reaction (2S,6S)-2,6-diaminopimelate + 2-oxoglutarate = (S)-2,3,4,5-tetrahydrodipicolinate + L-glutamate + H2O + H(+). It functions in the pathway amino-acid biosynthesis; L-lysine biosynthesis via DAP pathway; LL-2,6-diaminopimelate from (S)-tetrahydrodipicolinate (aminotransferase route): step 1/1. In terms of biological role, involved in the synthesis of meso-diaminopimelate (m-DAP or DL-DAP), required for both lysine and peptidoglycan biosynthesis. Catalyzes the direct conversion of tetrahydrodipicolinate to LL-diaminopimelate. This Geobacter sp. (strain M21) protein is LL-diaminopimelate aminotransferase.